Here is a 359-residue protein sequence, read N- to C-terminus: 2-amino-3-carboxymuconate-6-semialdehyde decarboxylase (359 aa).

A compositionally biased stretch (low complexity) spans 1–13 (MENKETTTTTTTT). The disordered stretch occupies residues 1–21 (MENKETTTTTTTTNNGSDKKK). Residues His-29 and His-31 each coordinate Zn(2+). Arg-70 serves as a coordination point for substrate. Residues His-197 and Asp-314 each coordinate Zn(2+).

The protein belongs to the metallo-dependent hydrolases superfamily. ACMSD family. As to quaternary structure, monomer.

It catalyses the reaction 2-amino-3-carboxymuconate 6-semialdehyde + H(+) = 2-aminomuconate 6-semialdehyde + CO2. Its pathway is secondary metabolite metabolism; quinolate metabolism. Its function is as follows. Converts alpha-amino-beta-carboxymuconate-epsilon-semialdehyde (ACMS) to alpha-aminomuconate semialdehyde (AMS). The sequence is that of 2-amino-3-carboxymuconate-6-semialdehyde decarboxylase (acmsd) from Dictyostelium discoideum (Social amoeba).